A 278-amino-acid chain; its full sequence is MEFTKMHGLGNDFVIVNGFGQSLPDDPGALARRVCDRRLGVGADGLVLLLPSAAADLRMRVFNPDGSEPEMCGNAIRCVALYARRRGLVAKTQLEVETLAGLIRPEILLDGDRETVRVDMGRPRLERAEIPMRGPAGPVVGEVLDAGERSFMVTAVSMGNPHCVVFGADLDDAGFRKYGPLLEVHPAFPARTNVEFVEVLSPGEVAVRVWERGVGPTPACGTGACAVAVAGVLTGRTARRVHVRLPGGVLLIEWPDDAGPVYMSGPAEEVFDGKWVRA.

2 residues coordinate substrate: N11 and N63. C72 (proton donor) is an active-site residue. Substrate-binding positions include 73–74 (GN), N160, N193, and 211–212 (ER). C220 serves as the catalytic Proton acceptor. 221–222 (GT) serves as a coordination point for substrate.

The protein belongs to the diaminopimelate epimerase family. Homodimer.

The protein localises to the cytoplasm. The enzyme catalyses (2S,6S)-2,6-diaminopimelate = meso-2,6-diaminopimelate. It participates in amino-acid biosynthesis; L-lysine biosynthesis via DAP pathway; DL-2,6-diaminopimelate from LL-2,6-diaminopimelate: step 1/1. In terms of biological role, catalyzes the stereoinversion of LL-2,6-diaminopimelate (L,L-DAP) to meso-diaminopimelate (meso-DAP), a precursor of L-lysine and an essential component of the bacterial peptidoglycan. In Desulforudis audaxviator (strain MP104C), this protein is Diaminopimelate epimerase.